The chain runs to 312 residues: Malate dehydrogenase (312 aa).

NAD(+) contacts are provided by residues 12–17 (GAGFTG) and aspartate 36. Substrate is bound by residues arginine 87 and arginine 93. Residues asparagine 100 and 123–125 (LTN) each bind NAD(+). Asparagine 125 provides a ligand contact to substrate. Serine 149 carries the post-translational modification Phosphoserine. Arginine 156 is a binding site for substrate. Histidine 180 serves as the catalytic Proton acceptor.

This sequence belongs to the LDH/MDH superfamily. MDH type 3 family.

It catalyses the reaction (S)-malate + NAD(+) = oxaloacetate + NADH + H(+). In terms of biological role, catalyzes the reversible oxidation of malate to oxaloacetate. This is Malate dehydrogenase from Bacillus mycoides (strain KBAB4) (Bacillus weihenstephanensis).